The following is a 1426-amino-acid chain: MAAASNGSEYFEFDVETGRESFARPSNAETVEQDEEDLRWAAIGRLPSQRQGTHNAILRRSQTQTQTSGYADGNVVQTIDVKKLDRADREMLVRQALATSDQDNFKLLSAIKERLDRVGMEVPKIEVRFENLNIEADVQAGTRALPTLVNVSRDFFERCLSSLRIIKPRKHKLNILKDISGIIKPGRMTLLLGPPGSGKSTLLLALAGKLDKSLKKTGNITYNGENLNKFHVKRTSAYISQTDNHIAELTVRETLDFAARCQGASEGFAGYMKDLTRLEKERGIRPSSEIDAFMKAASVKGEKHSVSTDYVLKVLGLDVCSDTMVGNDMMRGVSGGQRKRVTTGEMTVGPRKTLFMDEISTGLDSSTTFQIVKCIRNFVHLMDATVLMALLQPAPETFDLFDDLILLSEGYMVYQGPREDVIAFFESLGFRLPPRKGVADFLQEVTSKKDQAQYWADPSKPYQFIPVSDIAAAFRNSKYGHAADSKLAAPFDKKSADPSALCRTKFAISGWENLKVCFVRELLLIKRHKFLYTFRTCQVGFVGLVTATVFLKTRLHPTSEQFGNEYLSCLFFGLVHMMFNGFSELPLMISRLPVFYKQRDNSFHPAWSWSIASWLLRVPYSVLEAVVWSGVVYFTVGLAPSAGRFFRYMLLLFSVHQMALGLFRMMASLARDMVIANTFGSAAILIVFLLGGFVIPKADIKPWWVWGFWVSPLSYGQRAIAVNEFTATRWMTPSAISDTTIGLNLLKLRSFPTNDYWYWIGIAVLIGYAILFNNVVTLALAYLNPLRKARAVVLDDPNEETALVADANQVISEKKGMILPFKPLTMTFHNVNYYVDMPKEMRSQGVPETRLQLLSNVSGVFSPGVLTALVGSSGAGKTTLMDVLAGRKTGGYTEGDIRISGHPKEQQTFARISGYVEQNDIHSPQVTVEESLWFSASLRLPKEITKEQKKEFVEQVMRLVELDTLRYALVGLPGTTGLSTEQRKRLTIAVELVANPSIIFMDEPTSGLDARAAAIVMRTVRNTVDTGRTVVCTIHQPSIDIFEAFDELLLMKRGGQVIYGGKLGTHSQVLVDYFQGINGVPPISSGYNPATWMLEVTTPALEEKYNMEFADLYKKSDQFREVEANIKQLSVPPEGSEPISFTSRYSQNQLSQFLLCLWKQNLVYWRSPEYNLVRLVFTTIAAFILGTVFWDIGSKRTSSQDLITVMGALYSACLFLGVSNASSVQPIVSIERTVFYREKAAGMYAPIPYAAAQGLVEIPYILTQTILYGVITYFTIGFERTFSKFVLYLVFMFLTFTYFTFYGMMAVGLTPNQHLAAVISSAFYSLWNLLSGFLVQKPLIPVWWIWFYYICPVAWTLQGVILSQLGDVESMINEPLFHGTVKEFIEYYFGYKPNMIGVSAAVLVGFCALFFSAFALSVKYLNFQRR.

Residues N6 and N150 are each glycosylated (N-linked (GlcNAc...) asparagine). The ABC transporter 1 domain occupies 160 to 434; the sequence is LSSLRIIKPR…FESLGFRLPP (275 aa). Residue 193-200 coordinates ATP; the sequence is GPPGSGKS. An N-linked (GlcNAc...) asparagine glycan is attached at N219. Position 276 is a phosphothreonine (T276). The 214-residue stretch at 512-725 folds into the ABC transmembrane type-2 1 domain; that stretch reads ENLKVCFVRE…GQRAIAVNEF (214 aa). 6 consecutive transmembrane segments (helical) span residues 530–550, 569–589, 618–638, 649–669, 675–695, and 760–780; these read FLYT…ATVF, CLFF…PLMI, VPYS…TVGL, MLLL…MASL, IANT…GFVI, and IGIA…TLAL. The 253-residue stretch at 826-1078 folds into the ABC transporter 2 domain; it reads MTFHNVNYYV…VLVDYFQGIN (253 aa). A glycan (N-linked (GlcNAc...) asparagine) is linked at N856. ATP is bound at residue 871-878; the sequence is GSSGAGKT. The ABC transmembrane type-2 2 domain maps to 1151-1365; sequence SQFLLCLWKQ…TLQGVILSQL (215 aa). 7 helical membrane passes run 1172–1192, 1202–1222, 1258–1278, 1285–1305, 1315–1335, 1342–1362, and 1396–1416; these read LVRL…FWDI, LITV…SNAS, IPYI…TIGF, FVLY…YGMM, LAAV…GFLV, VWWI…GVIL, and IGVS…AFAL.

The protein belongs to the ABC transporter superfamily. ABCG family. PDR (TC 3.A.1.205) subfamily. Expressed in seedlings, stems, leaves, siliques and inflorescence. In seeds, confined to the endosperm. Highly expressed in the tapetum of anthers.

It localises to the cell membrane. It catalyses the reaction abscisate(in) + ATP + H2O = abscisate(out) + ADP + phosphate + H(+). Together with ABCG25, export abscisic acid (ABA) from the endosperm to deliver it to the embryo via ABCG30 and ABCG40-mediated import to suppress radicle extension and subsequent embryonic growth. Together with ABCG9, involved in pollen coat deposition of steryl glycosides required for pollen fitness. May be a general defense protein. The sequence is that of ABC transporter G family member 31 from Arabidopsis thaliana (Mouse-ear cress).